The following is a 304-amino-acid chain: N-acetyl-D-glucosamine kinase (304 aa).

ATP contacts are provided by residues 4-11 (GFDIGGTK) and 133-140 (GFGGGLIF). Residues histidine 157, cysteine 178, cysteine 180, and cysteine 185 each contribute to the Zn(2+) site.

Belongs to the ROK (NagC/XylR) family. NagK subfamily.

It catalyses the reaction N-acetyl-D-glucosamine + ATP = N-acetyl-D-glucosamine 6-phosphate + ADP + H(+). It participates in cell wall biogenesis; peptidoglycan recycling. In terms of biological role, catalyzes the phosphorylation of N-acetyl-D-glucosamine (GlcNAc) derived from cell-wall degradation, yielding GlcNAc-6-P. This Mannheimia succiniciproducens (strain KCTC 0769BP / MBEL55E) protein is N-acetyl-D-glucosamine kinase.